We begin with the raw amino-acid sequence, 433 residues long: Pyrimidine-nucleoside phosphorylase (433 aa).

A phosphate-binding site is contributed by 81 to 83 (KHS). K(+) contacts are provided by glycine 88 and threonine 90. Phosphate is bound by residues threonine 92, 108–110 (KMS), and threonine 120. Substrate is bound by residues arginine 168 and lysine 187. Residues leucine 243, alanine 246, and glutamate 255 each coordinate K(+).

Belongs to the thymidine/pyrimidine-nucleoside phosphorylase family. As to quaternary structure, homodimer. Requires K(+) as cofactor.

It carries out the reaction uridine + phosphate = alpha-D-ribose 1-phosphate + uracil. The enzyme catalyses thymidine + phosphate = 2-deoxy-alpha-D-ribose 1-phosphate + thymine. The catalysed reaction is 2'-deoxyuridine + phosphate = 2-deoxy-alpha-D-ribose 1-phosphate + uracil. In terms of biological role, catalyzes phosphorolysis of the pyrimidine nucleosides uridine, thymidine and 2'-deoxyuridine with the formation of the corresponding pyrimidine base and ribose-1-phosphate. The protein is Pyrimidine-nucleoside phosphorylase (pdp) of Staphylococcus aureus (strain bovine RF122 / ET3-1).